An 864-amino-acid polypeptide reads, in one-letter code: Leucine--tRNA ligase (864 aa).

The short motif at 42 to 52 is the 'HIGH' region element; the sequence is PYPSGKLHMGH. The short motif at 624–628 is the 'KMSKS' region element; that stretch reads KMSKS. Lys-627 is a binding site for ATP.

Belongs to the class-I aminoacyl-tRNA synthetase family.

It localises to the cytoplasm. It carries out the reaction tRNA(Leu) + L-leucine + ATP = L-leucyl-tRNA(Leu) + AMP + diphosphate. The polypeptide is Leucine--tRNA ligase (Burkholderia cenocepacia (strain HI2424)).